The primary structure comprises 583 residues: MQTPKPRPGSLEVPQKKSPASTPKTARKLKTSESDPVSSPNTKIRTPKTQSPKVVADRRSPRTPVNEIQKKRTGKTPELASQISQLQEELKKAKEQLSASEALKKEAQDQAEETKQQLMEINASEDSRIDELRKLSQERDKAWQSELEAMQRQHAMDSAALSSTMNEVQKLKAQLSESENVENLRMELNETLSLVEKLRGELFDAKEGEAQAHEIVSGTEKQLEIANLTLEMLRSDGMKMSEACNSLTTELEQSKSEVRSLEQLVRQLEEEDEARGNANGDSSSVEELKEEINVARQEISQLKSAVEVTERRYHEEYIQSTLQIRTAYEQVDEVKSGYAQREAELGEELKKTKAERDSLHERLMDKEAKLRILVDENEILNSKIKEKEEVYLNLENSLNQNEPEDTGELKKLESDVMELRANLMDKEMELQSVMSQYESLRSEMETMQSEKNKAIDEALAKLGSLTEEADKSGKRAENATEQLGAAQVTNTELEAELRRLKVQCDQWRKAAEAAATMLSGGNNNNNSNGKYVERTGSLESPLRRRNVNMSPYMGETDDELSSPKKKNGSMLKKIGVLLKKSQK.

The N-terminal 55 residues, 1 to 55 (MQTPKPRPGSLEVPQKKSPASTPKTARKLKTSESDPVSSPNTKIRTPKTQSPKVV), are a transit peptide targeting the chloroplast. Disordered regions lie at residues 1–80 (MQTP…PELA) and 101–125 (EALKKEAQDQAEETKQQLMEINASE). Positions 34-52 (SDPVSSPNTKIRTPKTQSP) are enriched in polar residues. 2 coiled-coil regions span residues 74 to 207 (GKTP…DAKE) and 238 to 516 (MKMS…AAAT). Positions 102–115 (ALKKEAQDQAEETK) are enriched in basic and acidic residues. The segment at 518–583 (LSGGNNNNNS…IGVLLKKSQK (66 aa)) is disordered. Low complexity predominate over residues 519 to 529 (SGGNNNNNSNG). At serine 540 the chain carries Phosphoserine.

The protein belongs to the ICR family. As to quaternary structure, interacts with ARAC8, ARAC11 and KIN13A in vitro, but not with ICR1 or SEC3A.

The protein resides in the plastid. Its subcellular location is the chloroplast. Functionally, acts as a scaffold, mediating interaction of ROPs with different proteins. This Arabidopsis thaliana (Mouse-ear cress) protein is Interactor of constitutive active ROPs 2, chloroplastic (ICR2).